Here is a 360-residue protein sequence, read N- to C-terminus: Inhibin alpha chain (360 aa).

The N-terminal stretch at 1–17 (MWLQLLLLLLAPQGGHG) is a signal peptide. The propeptide occupies 18–60 (CHGLELDRELVLAKVRALFLDALGPPPVTGEGGDPGVRRLHRR). A propeptide spans 61–226 (HAVGGFMRRG…PPSGGERARR (166 aa)) (inhibin alpha N-terminal region). 2 N-linked (GlcNAc...) asparagine glycosylation sites follow: asparagine 140 and asparagine 262. 3 disulfide bridges follow: cysteine 256-cysteine 322, cysteine 285-cysteine 357, and cysteine 289-cysteine 359.

Belongs to the TGF-beta family. As to quaternary structure, dimeric, linked by one or more disulfide bonds. Activin B is a dimer of alpha and beta-B. Inhibin A is a dimer of alpha and beta-A. Inhibin B is a dimer of alpha and beta-B. Interacts with TGFBR3L; this interaction regulates female fertility. Post-translationally, proteolytic processing yields a number of bioactive forms, consisting either solely of the mature alpha chain, of the most N-terminal propeptide linked through a disulfide bond to the mature alpha chain, or of the entire proprotein.

The protein localises to the secreted. Inhibins and activins inhibit and activate, respectively, the secretion of follitropin by the pituitary gland. Inhibins/activins are involved in regulating a number of diverse functions such as hypothalamic and pituitary hormone secretion, gonadal hormone secretion, germ cell development and maturation, erythroid differentiation, insulin secretion, nerve cell survival, embryonic axial development or bone growth, depending on their subunit composition. Inhibins appear to oppose the functions of activins. Functionally, inhibin A is a dimer of alpha/INHA and beta-A/INHBA that functions as a feedback regulator in the hypothalamic-pituitary-gonadal (HPG) axis. Inhibits the secretion of FSH from the anterior pituitary gland by acting on pituitary gonadotrope cells. Antagonizes activin A by binding to the proteoglycan, betaglycan, and forming a stable complex with and, thereby, sequestering type II activin receptors while excluding type I receptor. In terms of biological role, inhibin B is a dimer of alpha and beta-B that plays a crucial role in the regulation of the reproductive system by inhibiting the secretion of follicle-stimulating hormone (FSH) from the anterior pituitary gland. Thereby, maintains reproductive homeostasis in both males and females. Acts as a more potent suppressor of FSH release than inhibin A. Functions as competitive receptor antagonist binding activin type II receptors with high affinity in the presence of the TGF-beta type III coreceptor/TGFBR3L. In Bos taurus (Bovine), this protein is Inhibin alpha chain (INHA).